The following is a 321-amino-acid chain: F420-non-reducing hydrogenase iron-sulfur subunit G (321 aa).

It belongs to the [NiFe]/[NiFeSe] hydrogenase small subunit family. The F420-non-reducing hydrogenase is composed of three subunits; MvhA, MvhD and MvhG. It forms a complex with the heterodisulfide reductase (Hdr).

The protein resides in the cytoplasm. Functionally, part of a complex that provides reducing equivalents for heterodisulfide reductase. This Archaeoglobus profundus (strain DSM 5631 / JCM 9629 / NBRC 100127 / Av18) protein is F420-non-reducing hydrogenase iron-sulfur subunit G (mvhG).